Here is a 574-residue protein sequence, read N- to C-terminus: Serine/arginine repetitive matrix protein 4 (574 aa).

Disordered stretches follow at residues 45–217, 257–291, 366–422, 454–508, and 526–574; these read LETP…HGGD, IVQN…ITRS, DLIS…SYSL, YCSS…VSSR, and RSRS…RARR. Residues 51–72 are compositionally biased toward basic and acidic residues; it reads PKDDEEKVKAKDLVTKTHEKNG. Basic residues-rich tracts occupy residues 73 to 88, 102 to 120, and 128 to 184; these read HIKR…RRAR, PKTK…RHRS, and VRKK…HRKA. Positions 194–217 are enriched in basic and acidic residues; the sequence is NRSEDCEKSGFRDGGRSSDVHGGD. The span at 275-289 shows a compositional bias: polar residues; it reads GNDTSSPPSSKTGIT. The segment covering 366 to 385 has biased composition (basic and acidic residues); that stretch reads DLISDRNRSPSHDRYEDGTR. A compositionally biased stretch (low complexity) spans 405 to 422; the sequence is RSLSSGRRSYSRSSSYSL. The segment covering 454-477 has biased composition (basic residues); it reads YCSSCKSRKHSRRRPSSPMRKRRR. Positions 478–487 are enriched in basic and acidic residues; the sequence is DSPSHLEARR. Residues 496–508 show a composition bias toward low complexity; that stretch reads IPYYRPSPSVSSR. Over residues 526–539 the composition is skewed to basic residues; that stretch reads RSRSCSRSRSRSHS. Residues 540 to 559 show a composition bias toward low complexity; sequence HTYSSYRSYSRSSSWNSLYS. Residues 560 to 574 are compositionally biased toward basic residues; the sequence is RRSRSRSRSYSRARR.

Belongs to the nSR100 family.

It localises to the nucleus. Functionally, splicing factor specifically required for neural cell differentiation. Acts in conjunction with nPTB/PTBP2 by binding directly to its regulated target transcripts and promotes neural-specific exon inclusion in many genes that function in neural cell differentiation. Required to promote the inclusion of neural-specific exon 10 in nPTB/PTBP2, leading to increased expression of neural-specific nPTB/PTBP2. The sequence is that of Serine/arginine repetitive matrix protein 4 (srrm4) from Danio rerio (Zebrafish).